Here is a 142-residue protein sequence, read N- to C-terminus: Large ribosomal subunit protein uL13 (142 aa).

Belongs to the universal ribosomal protein uL13 family. As to quaternary structure, part of the 50S ribosomal subunit.

In terms of biological role, this protein is one of the early assembly proteins of the 50S ribosomal subunit, although it is not seen to bind rRNA by itself. It is important during the early stages of 50S assembly. The chain is Large ribosomal subunit protein uL13 from Treponema pallidum (strain Nichols).